A 391-amino-acid polypeptide reads, in one-letter code: Ferrochelatase (391 aa).

Residues H196 and E281 each coordinate Fe cation.

This sequence belongs to the ferrochelatase family.

It localises to the cytoplasm. The enzyme catalyses heme b + 2 H(+) = protoporphyrin IX + Fe(2+). It functions in the pathway porphyrin-containing compound metabolism; protoheme biosynthesis; protoheme from protoporphyrin-IX: step 1/1. In terms of biological role, catalyzes the ferrous insertion into protoporphyrin IX. This Prochlorococcus marinus (strain AS9601) protein is Ferrochelatase.